The primary structure comprises 237 residues: Ribosomal RNA small subunit methyltransferase G (237 aa).

S-adenosyl-L-methionine contacts are provided by residues Gly-78, Phe-83, 129-130 (AE), and Arg-148.

It belongs to the methyltransferase superfamily. RNA methyltransferase RsmG family.

The protein resides in the cytoplasm. Functionally, specifically methylates the N7 position of a guanine in 16S rRNA. The protein is Ribosomal RNA small subunit methyltransferase G of Streptococcus pyogenes serotype M12 (strain MGAS2096).